Here is a 387-residue protein sequence, read N- to C-terminus: RNA polymerase II elongation factor ELL3 (387 aa).

2 disordered regions span residues 127–148 and 186–275; these read LTEG…EGHP and LSNR…EEVP. Over residues 230 to 239 the composition is skewed to polar residues; it reads SPLQGLSNQD. Ser-240 carries the post-translational modification Phosphoserine. Residues 240–251 are compositionally biased toward acidic residues; that stretch reads SPEEQDWGQDAD. The span at 257-271 shows a compositional bias: low complexity; that stretch reads EQSLSVQSASESPSP. The 111-residue stretch at 275–385 folds into the OCEL domain; sequence PDYLLQYSTI…LILEFEEKNR (111 aa).

Belongs to the ELL/occludin family. In terms of assembly, interacts with AFF4. Component of the super elongation complex (SEC), at least composed of EAF1, EAF2, CDK9, MLLT3/AF9, AFF (AFF1 or AFF4), the P-TEFb complex and ELL (ELL, ELL2 or ELL3). Component of the little elongation complex (LEC), at least composed of ELL (ELL, ELL2 or ELL3), ZC3H8, ICE1 and ICE2.

Its subcellular location is the nucleus. Its function is as follows. Enhancer-binding elongation factor that specifically binds enhancers in embryonic stem cells (ES cells), marks them, and is required for their future activation during stem cell specification. Elongation factor component of the super elongation complex (SEC), a complex required to increase the catalytic rate of RNA polymerase II transcription by suppressing transient pausing by the polymerase at multiple sites along the DNA. Component of the little elongation complex (LEC), a complex required to regulate small nuclear RNA (snRNA) gene transcription by RNA polymerase II and III. Does not only bind to enhancer regions of active genes, but also marks the enhancers that are in a poised or inactive state in ES cells and is required for establishing proper RNA polymerase II occupancy at developmentally regulated genes in a cohesin-dependent manner. Probably required for priming developmentally regulated genes for later recruitment of the super elongation complex (SEC), for transcriptional activation during differentiation. Required for recruitment of P-TEFb within SEC during differentiation. Probably preloaded on germ cell chromatin, suggesting that it may prime gene activation by marking enhancers as early as in the germ cells. Promoting epithelial-mesenchymal transition (EMT). The chain is RNA polymerase II elongation factor ELL3 (Ell3) from Rattus norvegicus (Rat).